Here is a 78-residue protein sequence, read N- to C-terminus: Acyl carrier protein (78 aa).

The 76-residue stretch at 2-77 (SDIEQRVKQA…SAIDYVTKKL (76 aa)) folds into the Carrier domain. Ser37 bears the O-(pantetheine 4'-phosphoryl)serine mark.

This sequence belongs to the acyl carrier protein (ACP) family. 4'-phosphopantetheine is transferred from CoA to a specific serine of apo-ACP by AcpS. This modification is essential for activity because fatty acids are bound in thioester linkage to the sulfhydryl of the prosthetic group.

It localises to the cytoplasm. It participates in lipid metabolism; fatty acid biosynthesis. Carrier of the growing fatty acid chain in fatty acid biosynthesis. In Acinetobacter baumannii (strain AB307-0294), this protein is Acyl carrier protein.